The following is a 224-amino-acid chain: Ribonuclease HII (224 aa).

The 189-residue stretch at 36-224 (RGVAGVDEVG…RRSFLRRFLG (189 aa)) folds into the RNase H type-2 domain. Residues Asp-42, Glu-43, and Asp-138 each coordinate a divalent metal cation.

It belongs to the RNase HII family. It depends on Mn(2+) as a cofactor. Mg(2+) is required as a cofactor.

It is found in the cytoplasm. It carries out the reaction Endonucleolytic cleavage to 5'-phosphomonoester.. In terms of biological role, endonuclease that specifically degrades the RNA of RNA-DNA hybrids. The sequence is that of Ribonuclease HII from Parasynechococcus marenigrum (strain WH8102).